Here is a 62-residue protein sequence, read N- to C-terminus: Alpha-elapitoxin-Pc1 (62 aa).

4 cysteine pairs are disulfide-bonded: Cys-3/Cys-24, Cys-17/Cys-41, Cys-43/Cys-54, and Cys-55/Cys-60.

Belongs to the three-finger toxin family. Short-chain subfamily. Type I alpha-neurotoxin sub-subfamily. As to expression, expressed by the venom gland.

The protein resides in the secreted. Bird-specific neurotoxin (tested on chicken) that acts as pseudo-irreversible antagonists at the nicotinic acetylcholine receptor (nAChR) of the skeletal neuromuscular junction. Has no significant effect on the electrically-induced twitches of the rat isolated phrenic nerve-diaphragm preparation. This Pseudechis colletti (Collett's snake) protein is Alpha-elapitoxin-Pc1.